We begin with the raw amino-acid sequence, 683 residues long: MANDPRKLLVTCALPYANGSIHLGHMLEHIQADIWVRYQRLRGNTVNFICADDAHGTPIMLKAQQMGMTPEAMIEMVSEEHQRDFAGFDISFDNYHSTHSDENRELASHIYLQLKKNGFISSRTISQLFDPEKEMFLPDRFVKGTCPKCKSEDQYGDNCDACGETYSPTELINPKSAVSGATPVMKDSEHFFFDLPQFESMLKEWTRSGSLQSETANKMQEWFEGGLQQWDISRDAPYFGFEIPGEKDKFFYVWLDAPIGYMGSFKNLCDKRGDLNFNEYWNKDSKTELYHFIGKDIVYFHSLFWPAMLDGSGFRKPTNVFVHGYVTVNGAKMSKSKGTFVKASTYLNHLDPECLRYYYAAKLNNRIDDLDLNLEDFTQRVNADVVNKIVNLASRNAGFITKRFDGKLSAHFAEPELYAEFAGAADRIAELFEAREFGRAIREITALADKANQYVDEKAPWVVAKQEGQDQALQDICTVGINLFRILMTYLKPVMPALAERTEAFLNQELTWEGVATPLTDHAVTPFKALFNRIDPKQVEAMIEASKAEAAAEKAAADAAKPKSAETELSKDPLAAEIEFDDFAKVDLRIAKILSCEAVEKSDKLLKFELDIGGETRQVFSGIKSAYQPEDLIGKYTVVVANLKPRKMKFGMSEGMILAAGPGGSDLWLLEPHQGAQAGMRVM.

The short motif at 15–25 is the 'HIGH' region element; it reads PYANGSIHLGH. 4 residues coordinate Zn(2+): Cys-146, Cys-149, Cys-159, and Cys-162. Residues 332–336 carry the 'KMSKS' region motif; sequence KMSKS. Residue Lys-335 coordinates ATP. The tRNA-binding domain maps to 582–683; it reads DFAKVDLRIA…QGAQAGMRVM (102 aa).

Belongs to the class-I aminoacyl-tRNA synthetase family. MetG type 1 subfamily. As to quaternary structure, homodimer. The cofactor is Zn(2+).

Its subcellular location is the cytoplasm. It carries out the reaction tRNA(Met) + L-methionine + ATP = L-methionyl-tRNA(Met) + AMP + diphosphate. Functionally, is required not only for elongation of protein synthesis but also for the initiation of all mRNA translation through initiator tRNA(fMet) aminoacylation. The polypeptide is Methionine--tRNA ligase (Vibrio cholerae serotype O1 (strain ATCC 39541 / Classical Ogawa 395 / O395)).